Here is a 145-residue protein sequence, read N- to C-terminus: UPF0201 protein Saci_1285 (145 aa).

The protein belongs to the UPF0201 family.

This chain is UPF0201 protein Saci_1285, found in Sulfolobus acidocaldarius (strain ATCC 33909 / DSM 639 / JCM 8929 / NBRC 15157 / NCIMB 11770).